The following is a 37-amino-acid chain: Dolichyl-diphosphooligosaccharide--protein glycosyltransferase subunit 4B (37 aa).

Over Met-1–Gly-8 the chain is Lumenal. The chain crosses the membrane as a helical span at residues Phe-9–Met-29. Residues Ala-30–Asn-37 are Cytoplasmic-facing.

It belongs to the OST4 family. Component of the oligosaccharyltransferase (OST) complex.

It is found in the endoplasmic reticulum membrane. Its function is as follows. Subunit of the oligosaccharyl transferase (OST) complex that catalyzes the initial transfer of a defined glycan (Glc(3)Man(9)GlcNAc(2) in eukaryotes) from the lipid carrier dolichol-pyrophosphate to an asparagine residue within an Asn-X-Ser/Thr consensus motif in nascent polypeptide chains, the first step in protein N-glycosylation. N-glycosylation occurs cotranslationally and the complex associates with the Sec61 complex at the channel-forming translocon complex that mediates protein translocation across the endoplasmic reticulum (ER). All subunits are required for a maximal enzyme activity. This Oryza sativa subsp. japonica (Rice) protein is Dolichyl-diphosphooligosaccharide--protein glycosyltransferase subunit 4B (OST4B).